We begin with the raw amino-acid sequence, 80 residues long: RNA-binding protein Hfq (80 aa).

Residues 10-69 (DPFLNLLRKEHVPVSIYLVNGIKLQGHIESFDQYVVLLRNTVTQMVYKHAISTVVPGRPV) enclose the Sm domain.

This sequence belongs to the Hfq family. In terms of assembly, homohexamer.

In terms of biological role, RNA chaperone that binds small regulatory RNA (sRNAs) and mRNAs to facilitate mRNA translational regulation in response to envelope stress, environmental stress and changes in metabolite concentrations. Also binds with high specificity to tRNAs. In Leptothrix cholodnii (strain ATCC 51168 / LMG 8142 / SP-6) (Leptothrix discophora (strain SP-6)), this protein is RNA-binding protein Hfq.